A 560-amino-acid chain; its full sequence is Glycolate permease GlcA (560 aa).

At 1-13 (MVTWTQMYMPMGG) the chain is on the cytoplasmic side. A helical membrane pass occupies residues 14 to 34 (LGLSALVALIPIIFFFVALAV). Over 35–41 (LRLKGHV) the chain is Periplasmic. A helical membrane pass occupies residues 42 to 62 (AGAITLILSILIAIFAFKMPI). Over 63–69 (DMAFAAA) the chain is Cytoplasmic. The chain crosses the membrane as a helical span at residues 70–90 (GYGFIYGLWPIAWIIVAAVFL). Over 91-130 (YKLTVASGQFDIIRSSVISITDDQRLQVLLIGFSFGALLE) the chain is Periplasmic. Residues 131 to 151 (GAAGFGAPVAITGALLVGLGF) traverse the membrane as a helical segment. The Cytoplasmic segment spans residues 152-158 (KPLYAAG). A helical membrane pass occupies residues 159-179 (LCLIANTAPVAFGALGVPILV). At 180-199 (AGQVTGIDPFHIGAMAGRQL) the chain is on the periplasmic side. Residues 200–220 (PFLSVLVPFWLVAMMDGWKGV) form a helical membrane-spanning segment. Residues 221 to 225 (KETWP) are Cytoplasmic-facing. The chain crosses the membrane as a helical span at residues 226 to 246 (AALVAGGSFAVTQFFTSNYIG). At 247 to 248 (PE) the chain is on the periplasmic side. A helical membrane pass occupies residues 249–269 (LPDITSALVSIVSLALFLKVW). Topologically, residues 270 to 313 (RPKNTETAISMGQSAGAMVVNKPSSGGPVPSEYSLGQIIRAWSP) are cytoplasmic. Residues 314-334 (FLILTVLVTIWTMKPFKALFA) traverse the membrane as a helical segment. Topologically, residues 335–378 (PGGAFYSLVINFQIPHLHQQVLKAAPIVAQPTPMDAVFKFDPLS) are periplasmic. Residues 379-399 (AGGTAIFIAAIISIFILGVGI) traverse the membrane as a helical segment. Residues 400–408 (KKGIGVFAE) are Cytoplasmic-facing. The helical transmembrane segment at 409 to 429 (TLISLKWPILSIGMVLAFAFV) threads the bilayer. The Periplasmic segment spans residues 430-438 (TNYSGMSTT). Residues 439–459 (LALVLAGTGVMFPFFSPFLGW) form a helical membrane-spanning segment. Residues 460–536 (LGVFLTGSDT…ELFRYTVKHS (77 aa)) are Cytoplasmic-facing. The helical transmembrane segment at 537–557 (LIFASVIGIITLLQAYVFTGM) threads the bilayer. The Periplasmic portion of the chain corresponds to 558 to 560 (LVS).

Belongs to the lactate permease family.

It is found in the cell inner membrane. It carries out the reaction glycolate(in) + H(+)(in) = glycolate(out) + H(+)(out). It catalyses the reaction (S)-lactate(in) + H(+)(in) = (S)-lactate(out) + H(+)(out). The catalysed reaction is (R)-lactate(in) + H(+)(in) = (R)-lactate(out) + H(+)(out). Inhibited by the proton ionophore carbonyl cyanide m-chlorophenylhydrazone (CCCP). Its function is as follows. Uptake of glycolate across the membrane. Can also transport L-lactate and D-lactate. Seems to be driven by a proton motive force. This chain is Glycolate permease GlcA, found in Escherichia coli (strain K12).